The primary structure comprises 421 residues: Galactooligosaccharide-binding protein (421 aa).

Positions 1–22 are cleaved as a signal peptide; the sequence is MKMAKKCSVFMLCAAVSLSLAA. The N-palmitoyl cysteine moiety is linked to residue cysteine 23. A lipid anchor (S-diacylglycerol cysteine) is attached at cysteine 23. The disordered stretch occupies residues 393-421; the sequence is ATGKADPKQALDQAAETAKGQIKAKHSGK.

Belongs to the bacterial solute-binding protein 1 family. As to quaternary structure, the complex is composed of two ATP-binding proteins (MsmX), two transmembrane proteins (GanP and GanQ) and a solute-binding protein (GanS).

It is found in the cell membrane. Its function is as follows. Involved in galactan degradation. Part of the ABC transporter complex GanPQS involved in the uptake of galactooligosaccharides. Binds mainly galactotetraose and galactotriose. The polypeptide is Galactooligosaccharide-binding protein (Bacillus subtilis (strain 168)).